The following is a 446-amino-acid chain: Probable glycine dehydrogenase (decarboxylating) subunit 1 (446 aa).

The protein belongs to the GcvP family. N-terminal subunit subfamily. The glycine cleavage system is composed of four proteins: P, T, L and H. In this organism, the P 'protein' is a heterodimer of two subunits.

It carries out the reaction N(6)-[(R)-lipoyl]-L-lysyl-[glycine-cleavage complex H protein] + glycine + H(+) = N(6)-[(R)-S(8)-aminomethyldihydrolipoyl]-L-lysyl-[glycine-cleavage complex H protein] + CO2. Its function is as follows. The glycine cleavage system catalyzes the degradation of glycine. The P protein binds the alpha-amino group of glycine through its pyridoxal phosphate cofactor; CO(2) is released and the remaining methylamine moiety is then transferred to the lipoamide cofactor of the H protein. The sequence is that of Probable glycine dehydrogenase (decarboxylating) subunit 1 from Thermococcus onnurineus (strain NA1).